We begin with the raw amino-acid sequence, 93 residues long: Small ribosomal subunit protein bS16 (93 aa).

This sequence belongs to the bacterial ribosomal protein bS16 family.

The polypeptide is Small ribosomal subunit protein bS16 (Roseiflexus castenholzii (strain DSM 13941 / HLO8)).